We begin with the raw amino-acid sequence, 442 residues long: Probable xylan O-acetyltransferase 8 (442 aa).

At 1–13 the chain is on the cytoplasmic side; that stretch reads MVQLPAMKRVKGR. The chain crosses the membrane as a helical; Signal-anchor for type II membrane protein span at residues 14–34; the sequence is APLSVVVAIIGGLALAGIIFT. Residues 35–442 are Lumenal-facing; it reads EDLRGLTEVK…TWNRLLYAHL (408 aa). Residue Asn96 is glycosylated (N-linked (GlcNAc...) asparagine). Intrachain disulfides connect Cys100-Cys151, Cys122-Cys187, Cys131-Cys426, and Cys344-Cys422. The GDS motif motif lies at 174 to 176; it reads GDS. Residue Ser176 is the Nucleophile of the active site. Residues Asn217, Asn346, and Asn384 are each glycosylated (N-linked (GlcNAc...) asparagine). The Proton donor role is filled by Asp421. The DXXH motif motif lies at 421–424; the sequence is DCIH. The active-site Proton acceptor is His424.

The protein belongs to the PC-esterase family. TBL subfamily.

Its subcellular location is the golgi apparatus membrane. Probable xylan acetyltransferase required for 2-O- and 3-O-monoacetylation of xylosyl residues in xylan. Possesses extremely low activity in vitro. This chain is Probable xylan O-acetyltransferase 8, found in Oryza sativa subsp. japonica (Rice).